Consider the following 450-residue polypeptide: Exodeoxyribonuclease 7 large subunit (450 aa).

Belongs to the XseA family. In terms of assembly, heterooligomer composed of large and small subunits.

The protein resides in the cytoplasm. It catalyses the reaction Exonucleolytic cleavage in either 5'- to 3'- or 3'- to 5'-direction to yield nucleoside 5'-phosphates.. In terms of biological role, bidirectionally degrades single-stranded DNA into large acid-insoluble oligonucleotides, which are then degraded further into small acid-soluble oligonucleotides. The polypeptide is Exodeoxyribonuclease 7 large subunit (Listeria monocytogenes serotype 4b (strain CLIP80459)).